A 1059-amino-acid chain; its full sequence is Ubiquitin carboxyl-terminal hydrolase 36 (1059 aa).

2 disordered regions span residues 24–49 and 94–148; these read VGNG…DSEM and SNNN…KPKR. Positions 94–123 are enriched in low complexity; the sequence is SNNNNSSSCNGSNFGNSKVVGANGHDNGNN. A compositionally biased stretch (polar residues) spans 130-139; that stretch reads QSESTQSGPS. In terms of domain architecture, USP spans 171-479; the sequence is TGMINVGNTC…NAYIMFYELD (309 aa). Cysteine 180 acts as the Nucleophile in catalysis. The active-site Proton acceptor is histidine 438. Positions 505–673 are disordered; the sequence is TVSSSSPTHT…KTPLKSSVKT (169 aa). Residues serine 508 and serine 510 each carry the phosphoserine modification. Residues 528–539 are compositionally biased toward polar residues; sequence GYSNGHATGSSN. 3 stretches are compositionally biased toward low complexity: residues 540-560, 592-611, and 633-647; these read AQKT…NGLQ, NGNK…KSVN, and ATAT…RPTA. Residues 655–664 show a composition bias toward basic and acidic residues; it reads MTEDSSDKPK. Phosphothreonine occurs at positions 673 and 682. 3 disordered regions span residues 687 to 893, 926 to 998, and 1012 to 1059; these read LVPY…EAST, KELV…RYHN, and KYNR…QSSS. 2 positions are modified to phosphoserine: serine 692 and serine 694. Composition is skewed to low complexity over residues 729–739 and 752–765; these read TKTNGGSLTNG and SSSS…ASAA. Serine 766 carries the post-translational modification Phosphoserine. The segment covering 766–776 has biased composition (acidic residues); that stretch reads SDDEDADEEEE. The segment covering 779-795 has biased composition (polar residues); that stretch reads KLTNGWQPQKQSQSLTQ. Residues 799–808 show a composition bias toward pro residues; sequence PPSPKTPPSP. Serine 801 bears the Phosphoserine mark. Threonine 804 bears the Phosphothreonine mark. Serine 807 is subject to Phosphoserine. The span at 825-839 shows a compositional bias: acidic residues; sequence DNEDEDDDDDEDEEE. 2 stretches are compositionally biased toward polar residues: residues 842–862 and 876–893; these read QVVS…STTP and KSQQ…EAST. Residues threonine 846 and threonine 861 each carry the phosphothreonine modification. Positions 926–940 are enriched in basic and acidic residues; it reads KELVAEAREQRQHDH. The segment covering 1048 to 1059 has biased composition (low complexity); that stretch reads QQQQQQSQQSSS.

The protein belongs to the peptidase C19 family. In terms of assembly, interacts with atms/PAF1, but not with CycT.

It is found in the nucleus. Its subcellular location is the nucleolus. It carries out the reaction Thiol-dependent hydrolysis of ester, thioester, amide, peptide and isopeptide bonds formed by the C-terminal Gly of ubiquitin (a 76-residue protein attached to proteins as an intracellular targeting signal).. Required for maintaining multiple types of adult stem cells, including male and female germline, epithelial follicle cell and intestinal stem cells. May function as a transcriptional repressor by continually deubiquiting histone H2B at the promoters of genes critical for cellular differentiation, thereby preventing histone H3 'Lys-4' trimethylation (H3K4). Controls selective autophagy activation by ubiquitinated proteins. The chain is Ubiquitin carboxyl-terminal hydrolase 36 (Usp36) from Drosophila pseudoobscura pseudoobscura (Fruit fly).